The primary structure comprises 435 residues: Adenylosuccinate synthetase (435 aa).

Residues 17-23 and 45-47 each bind GTP; these read GDEGKGK and GHT. Asp-18 serves as the catalytic Proton acceptor. Mg(2+)-binding residues include Asp-18 and Gly-45. IMP contacts are provided by residues 18 to 21, 43 to 46, Thr-135, Arg-149, Gln-230, Thr-245, and Arg-309; these read DEGK and NAGH. The active-site Proton donor is the His-46. Residue 305-311 coordinates substrate; it reads TVSGRAR. Residues Arg-311, 337–339, and 419–421 contribute to the GTP site; these read LLD and SVG.

It belongs to the adenylosuccinate synthetase family. Homodimer. The cofactor is Mg(2+).

The protein localises to the cytoplasm. The enzyme catalyses IMP + L-aspartate + GTP = N(6)-(1,2-dicarboxyethyl)-AMP + GDP + phosphate + 2 H(+). Its pathway is purine metabolism; AMP biosynthesis via de novo pathway; AMP from IMP: step 1/2. Its function is as follows. Plays an important role in the de novo pathway of purine nucleotide biosynthesis. Catalyzes the first committed step in the biosynthesis of AMP from IMP. The chain is Adenylosuccinate synthetase from Spiroplasma citri.